A 258-amino-acid polypeptide reads, in one-letter code: Small ribosomal subunit protein uS2 (258 aa).

The interval 222–258 is disordered; sequence GKALRDQDEAEQVEPVSQEEKDEVVAEAMSEADFEEQ.

It belongs to the universal ribosomal protein uS2 family.

The sequence is that of Small ribosomal subunit protein uS2 from Campylobacter fetus subsp. fetus (strain 82-40).